The following is a 20-amino-acid chain: MNKKSIRNVNLKGKRVFDRV.

The segment at 1–20 (MNKKSIRNVNLKGKRVFDRV) is disordered.

This sequence belongs to the phosphoglycerate kinase family. In terms of assembly, monomer.

The protein resides in the cytoplasm. The enzyme catalyses (2R)-3-phosphoglycerate + ATP = (2R)-3-phospho-glyceroyl phosphate + ADP. It participates in carbohydrate degradation; glycolysis; pyruvate from D-glyceraldehyde 3-phosphate: step 2/5. The chain is Phosphoglycerate kinase from Bacillus cereus.